We begin with the raw amino-acid sequence, 836 residues long: MDFPGTLRPSLFKAGPLGMTDGPDLSFMCSWRDALTLPGSQPQNCKDPTLSFAKNLLWEPSTPGPLPLLMPPDPDPWDPGVTAQDFLFRGGHCYQYQSQAVLDVTEQLSRFLWDHGDIAFAPLGRLMLENFRLEGNRGYSKKMTIVSAKKLLQDLGGHQPWGCPWASLSRRLRRFSIVGGPVLSRSVSLLMGKLLHEELAMRWEQLLMDEAFTGGALAWLPGRTARAGQLVYPSGGALDKLYFQEVSVTSGGNPRILENPGHVQLRGPVRQVVTSTVQGETLLAVRSDYHCATWKIDKQGPPALLQVMQVEKGATGISLSPHLSGELAICSRSGAVCLWTPQAGLQTIYKDTETLAFRDPSPWRWADFTAHPRVLTVGDRTGVKMVDIQGPPGCGLLLFRAGAEAACQKGERVLLAQYLGQPGQTPPSLHLICTQFSIYLMDERLPLVPMLKWDHGLPSAPLLARLLPPASPGHPRPLLLGGQGGQLQLLHITGEGTSMPQLAGPPQSLPSITESLSAFPLLEPKKQQLLQERLEAPVIGLAAVPLCASAPGLLLFQLSAAGDVFYQHLRLLQASSPRKVPEQATAPSVDQVSTPSWTPQASARCSRWLEDLMELSPTRPLWVAPTFSHRRFLGHMERQKSQETMPQKLRAAMAKGQLLRPGDLSTLPRAEPPPAPQCSQQDELTERLTEAWEGRVTAWWRRHRGETSETQTQSKRPKRRTQLSSTFSSFTSYLDSPDASSAPRSQDLSTSEARLQSPRVPPSQELTQEVWGQGVKRERRQTLRDHTDKLPLKRDTPGPVATPPSQASSLQTMSFRQQTPVHSGSQPPQKKPRMGF.

Disordered regions lie at residues G662–E683 and H703–F836. The span at D738 to R754 shows a compositional bias: polar residues. The segment covering R780–T796 has biased composition (basic and acidic residues). Phosphothreonine is present on T802. Residues P803 to P828 show a composition bias toward polar residues.

Component of the transcription factor SL1/TIF-IB complex, composed of TBP and at least TAF1A, TAF1B, TAF1C and TAF1D. In the complex interacts directly with TBP, TAF1A and TAF1B. Interaction of the SL1/TIF-IB subunits with TBP excludes interaction of TBP with the transcription factor IID (TFIID) subunits. Interacts with MYC and RRN3. Interacts with p53/TP53; the interaction prevents the association of SL1/TIF-IB with UBTF and represses RNA polymerase I transcription. Part of Pol I pre-initiation complex (PIC), in which Pol I core assembles with RRN3 and promoter-bound UTBF and SL1/TIF-IB complex.

The protein localises to the nucleus. It is found in the nucleolus. Its function is as follows. Component of the transcription factor SL1/TIF-IB complex, which is involved in the assembly of the PIC (pre-initiation complex) during RNA polymerase I-dependent transcription. The rate of PIC formation probably is primarily dependent on the rate of association of SL1/TIF-IB with the rDNA promoter. SL1/TIF-IB is involved in stabilization of nucleolar transcription factor 1/UBTF on rDNA. Formation of SL1/TIF-IB excludes the association of TBP with TFIID subunits. Recruits RNA polymerase I to the rRNA gene promoter via interaction with RRN3. This Mus musculus (Mouse) protein is TATA box-binding protein-associated factor RNA polymerase I subunit C (Taf1c).